The chain runs to 519 residues: Aldehyde dehydrogenase X, mitochondrial (519 aa).

The transit peptide at 1–19 (MLTARLLLPRLLCLQGRTT) directs the protein to the mitochondrion. At K53 the chain carries N6-acetyllysine. K54 carries the post-translational modification N6-acetyllysine; alternate. Residue K54 is modified to N6-succinyllysine; alternate. N6-succinyllysine is present on K83. Residue 264 to 269 (GSTEVG) coordinates NAD(+). The active-site Proton acceptor is E287. Residue C321 is the Nucleophile of the active site. K366, K385, K401, K416, and K428 each carry N6-acetyllysine; alternate. An N6-succinyllysine; alternate mark is found at K366, K385, K401, K416, and K428. At K431 the chain carries N6-acetyllysine.

The protein belongs to the aldehyde dehydrogenase family. In terms of assembly, homotetramer.

The protein localises to the mitochondrion matrix. It carries out the reaction an aldehyde + NAD(+) + H2O = a carboxylate + NADH + 2 H(+). It participates in alcohol metabolism; ethanol degradation; acetate from ethanol: step 2/2. ALDHs play a major role in the detoxification of alcohol-derived acetaldehyde. They are involved in the metabolism of corticosteroids, biogenic amines, neurotransmitters, and lipid peroxidation. This Mus musculus (Mouse) protein is Aldehyde dehydrogenase X, mitochondrial (Aldh1b1).